The chain runs to 681 residues: Glycogen-binding subunit 76A (681 aa).

5 disordered regions span residues 1-20, 53-94, 232-251, 285-391, and 405-435; these read MNDP…SRPP, LGSQ…DLQP, SLTE…NGHL, FADR…ASNL, and QDAT…CRPQ. Over residues 59 to 69 the composition is skewed to acidic residues; that stretch reads EEGEGNAEDEP. Residues 72 to 91 are compositionally biased toward polar residues; the sequence is NGTSTNTWVNSHDSEQTVTD. 3 stretches are compositionally biased toward basic and acidic residues: residues 237 to 251, 297 to 308, and 321 to 336; these read EQTK…NGHL, RVQKESSQERVP, and PSDR…RVQE. Polar residues predominate over residues 353–364; it reads TESISTEVTTLE. Basic and acidic residues predominate over residues 365 to 374; that stretch reads RSPEESRNDE. A CBM21 domain is found at 525-632; the sequence is AVREKQVSLE…NNYGANYCFQ (108 aa). A Phosphothreonine modification is found at threonine 545. 2 positions are modified to phosphoserine: serine 547 and serine 549.

The sequence is that of Glycogen-binding subunit 76A (Gbs-76A) from Drosophila melanogaster (Fruit fly).